Reading from the N-terminus, the 796-residue chain is Phenylalanine--tRNA ligase beta subunit (796 aa).

In terms of domain architecture, tRNA-binding spans 39-149 (SAALKSFRVA…GDAPLGTTFA (111 aa)). Positions 398 to 470 (LARKALAYDP…RVHGLDAVPS (73 aa)) constitute a B5 domain. Mg(2+) is bound by residues aspartate 448, aspartate 454, glutamate 457, and glutamate 458. One can recognise an FDX-ACB domain in the interval 703–795 (PALQAVTRDF…AAGKLGAELR (93 aa)).

Belongs to the phenylalanyl-tRNA synthetase beta subunit family. Type 1 subfamily. In terms of assembly, tetramer of two alpha and two beta subunits. It depends on Mg(2+) as a cofactor.

Its subcellular location is the cytoplasm. The catalysed reaction is tRNA(Phe) + L-phenylalanine + ATP = L-phenylalanyl-tRNA(Phe) + AMP + diphosphate + H(+). In Novosphingobium aromaticivorans (strain ATCC 700278 / DSM 12444 / CCUG 56034 / CIP 105152 / NBRC 16084 / F199), this protein is Phenylalanine--tRNA ligase beta subunit.